The chain runs to 317 residues: MSHAVRQPGTPPVLFLMGPTATGKTDCAVALARRLPVEIISVDSALVYRGMDIGTAKPSAALLAEVPHRLIDILDPSEAYSAARFRADALAAIHEIHAAGRVPLLAGGTMLYFRALEHGLSELPEADPALRRRLEGEAAAHGWGALHDRLAAVDPEAAARIHPHDAQRIQRALEVWELTGQSLSELQRAGRQRLPWPIGKWVLMPESRGELHRRIARRFDQMLAQGFIDEVAALRQRPDLHRALPAMRSVGYRQVWDYLDGCYDRETLRERGIAATRQFAKRQITWLRRERGVTAWLTPEQARDGLPERVGRFLSGG.

18-25 is a binding site for ATP; the sequence is GPTATGKT. 20-25 contacts substrate; sequence TATGKT. 3 interaction with substrate tRNA regions span residues 43-46, 167-171, and 281-288; these read DSAL, QRIQR, and KRQITWLR.

This sequence belongs to the IPP transferase family. Monomer. It depends on Mg(2+) as a cofactor.

The catalysed reaction is adenosine(37) in tRNA + dimethylallyl diphosphate = N(6)-dimethylallyladenosine(37) in tRNA + diphosphate. Functionally, catalyzes the transfer of a dimethylallyl group onto the adenine at position 37 in tRNAs that read codons beginning with uridine, leading to the formation of N6-(dimethylallyl)adenosine (i(6)A). This Alkalilimnicola ehrlichii (strain ATCC BAA-1101 / DSM 17681 / MLHE-1) protein is tRNA dimethylallyltransferase.